The sequence spans 514 residues: MATNNANYRIKTIKDGCTAEELFRGDGLTYNDFIILPGFIDFGAADVNISGQFTKRIRLHIPIVSSPMDTITENEMAKTMALMGGVGVLHNNCTVERQVEMVKSVKAYRNGFISKPKSVPPNTPISNIIRIKEEKGISGILVTENGDPHGKLLGIVCTKDIDYVKNKDTPVSAVMTRREKMTVERAPIQLEEAMDVLNRSRYGYLPIVNENDEVVNLCSRRDAVRARDYPHSTLDKSGRLICAAATSTRPEDKRRVAALADVGVDVLVLDSSQGNTIYQIAFIKWVKSTYPHLEVVAGNVVTQDQAKNLIDAGADGIRIGMGSGSICITQEVLACGRPQGTAVYKVAQYCASRGVPCTADGGLRQVGDICKALAIGANCAMLGGMLSGTTETPGEYFFKGGVRLKVYRGMGSLEAMSQGKESGKRYLSENEAVQVAQGVSGNVVDKGSAAKLIAYVSKGLQQSAQDIGEISFDAIREKMYAGQVLFSRRSPTAQGEGGVHSLHSYEKKLFAAKM.

CBS domains are found at residues 112–171 (FISK…DTPV) and 175–233 (MTRR…PHST). Residues 270–272 (DSS) and 320–322 (GMG) each bind NAD(+). K(+) contacts are provided by Gly-322 and Gly-324. Ser-325 is a binding site for IMP. Residue Cys-327 coordinates K(+). Cys-327 acts as the Thioimidate intermediate in catalysis. Residues 360–362 (DGG), 383–384 (GG), and 407–411 (YRGMG) each bind IMP. Arg-425 (proton acceptor) is an active-site residue. Residue Gln-437 participates in IMP binding. Glu-496, Gly-497, and Gly-498 together coordinate K(+). The short motif at 512–514 (AKM) is the Microbody targeting signal element.

This sequence belongs to the IMPDH/GMPR family. As to quaternary structure, heterotetramer. Interacts with glycosomal protein sorting receptor PEX5. K(+) is required as a cofactor.

It localises to the glycosome. It carries out the reaction IMP + NAD(+) + H2O = XMP + NADH + H(+). The protein operates within purine metabolism; XMP biosynthesis via de novo pathway; XMP from IMP: step 1/1. Its activity is regulated as follows. Mycophenolic acid (MPA) is a non-competitive inhibitor that prevents formation of the closed enzyme conformation by binding to the same site as the amobile flap. In contrast, mizoribine monophosphate (MZP) is a competitive inhibitor that induces the closed conformation. MPA is a potent inhibitor of mammalian IMPDHs but a poor inhibitor of the bacterial enzymes. MZP is a more potent inhibitor of bacterial IMPDH. Potently inhibited by MPA. Inhibited by XMP and GMP. Catalyzes the conversion of inosine 5'-phosphate (IMP) to xanthosine 5'-phosphate (XMP), the first committed and rate-limiting step in the de novo synthesis of guanine nucleotides, and therefore plays an important role in the regulation of cell growth. In Leishmania donovani, this protein is Inosine-5'-monophosphate dehydrogenase.